We begin with the raw amino-acid sequence, 265 residues long: Uridylate kinase (265 aa).

The segment at 1–29 (MTESREPHVAGSAAPRPEPANGLASGQPS) is disordered. 40–43 (KLGG) provides a ligand contact to ATP. G81 contributes to the UMP binding site. The ATP site is built by G82 and R86. UMP is bound by residues D101 and 162–169 (MGLPYFST). 2 residues coordinate ATP: F195 and D198.

This sequence belongs to the UMP kinase family. As to quaternary structure, homohexamer.

It is found in the cytoplasm. The catalysed reaction is UMP + ATP = UDP + ADP. It participates in pyrimidine metabolism; CTP biosynthesis via de novo pathway; UDP from UMP (UMPK route): step 1/1. With respect to regulation, inhibited by UTP. Functionally, catalyzes the reversible phosphorylation of UMP to UDP. The chain is Uridylate kinase from Mycobacterium avium (strain 104).